A 530-amino-acid chain; its full sequence is Copine-D (530 aa).

C2 domains lie at Met-1–Met-122 and Leu-130–Ile-248. Residues Asp-25, Asp-31, Asp-85, Asp-87, and Asp-100 each contribute to the Ca(2+) site. The VWFA domain occupies Asn-289–Ile-507.

This sequence belongs to the copine family. Requires Ca(2+) as cofactor.

The polypeptide is Copine-D (cpnD) (Dictyostelium discoideum (Social amoeba)).